Here is a 674-residue protein sequence, read N- to C-terminus: Polyunsaturated fatty acid 5-lipoxygenase (674 aa).

One can recognise a PLAT domain in the interval 2–118; it reads PSYTVTVATG…EVVLRDGRAK (117 aa). Residues Gly-17, Thr-18, Asp-19, Asn-44, Asp-45, Glu-47, Asp-79, and Asp-80 each contribute to the Ca(2+) site. One can recognise a Lipoxygenase domain in the interval 119-674; the sequence is LARDDQIHIL…PDRIPNSVAI (556 aa). Ser-272 bears the Phosphoserine; by MAPKAPK2 mark. Positions 368 and 373 each coordinate Fe cation. Position 524 is a phosphoserine; by PKA (Ser-524). Residues His-551, Asn-555, and Ile-674 each contribute to the Fe cation site.

Belongs to the lipoxygenase family. In terms of assembly, homodimer. Interacts with ALOX5AP and LTC4S. Interacts with COTL1, the interaction is required for stability and efficient catalytic activity. Interacts with PIK3R1; this interaction bridges ALOX5 with CD40 after CD40 ligation in B cells and leads to the production of reactive oxygen species (ROS). Interacts (via PLAT domain) with DICER1 (via Dicer dsRNA-binding fold domain); this interaction enhances arachidonate 5-lipoxygenase activity and modifies the miRNA precursor processing activity of DICER1. Fe cation serves as cofactor. In terms of processing, serine phosphorylation by MAPKAPK2 is stimulated by arachidonic acid. Phosphorylation on Ser-524 by PKA has an inhibitory effect. Phosphorylation on Ser-272 prevents export from the nucleus. Phosphorylation at Ser-524 is stimulated by 8-bromo-3',5'-cyclic AMP or prostaglandin E2.

The protein localises to the cytoplasm. Its subcellular location is the nucleus matrix. The protein resides in the nucleus membrane. It localises to the perinuclear region. It is found in the cytosol. The protein localises to the nucleus envelope. Its subcellular location is the nucleus intermembrane space. The catalysed reaction is (5Z,8Z,11Z,14Z)-eicosatetraenoate + O2 = leukotriene A4 + H2O. It carries out the reaction 18-HEPE + O2 = (5S)-hydroperoxy-18-hydroxy-(7E,9E,11Z,14Z,16E)-eicosapentaenoate. The enzyme catalyses (18R)-hydroxy-(5Z,8Z,11Z,14Z,16E)-eicosapentaenoate + O2 = (5S)-hydroperoxy-(18R)-hydroxy-(6E,8Z,11Z,14Z,16E)-eicosapentaenoate. It catalyses the reaction (18S)-hydroxy-(5Z,8Z,11Z,14Z,16E)-eicosapentaenoate + O2 = (5S)-hydroperoxy-(18S)-hydroxy-(6E,8Z,11Z,14Z,16E)-eicosapentaenoate. The catalysed reaction is (5S)-hydroperoxy-(18S)-hydroxy-(6E,8Z,11Z,14Z,16E)-eicosapentaenoate = (5S,6S)-epoxy-(18S)-hydroxy-(7E,9E,11Z,14Z,16E)-eicosapentaenoate + H2O. It carries out the reaction (5S)-hydroperoxy-(18R)-hydroxy-(6E,8Z,11Z,14Z,16E)-eicosapentaenoate = (5S,6S)-epoxy-(18R)-hydroxy-(7E,9E,11Z,14Z,16E)-eicosapentaenoate + H2O. The enzyme catalyses (5S)-hydroperoxy-18-hydroxy-(7E,9E,11Z,14Z,16E)-eicosapentaenoate = (5S,6S)-epoxy-18-hydroxy-(7E,9E,11Z,14Z,16E)-eicosapentaenoate + H2O. It catalyses the reaction (5Z,8Z,11Z,14Z)-eicosatetraenoate + O2 = (5S)-hydroperoxy-(6E,8Z,11Z,14Z)-eicosatetraenoate. The catalysed reaction is (15S)-hydroxy-(5Z,8Z,11Z,13E)-eicosatetraenoate + O2 = (5S)-hydroperoxy-(15S)-hydroxy-(6E,8Z,11Z,13E)-eicosatetraenoate. It carries out the reaction (5S)-hydroperoxy-(6E,8Z,11Z,14Z)-eicosatetraenoate = leukotriene A4 + H2O. The enzyme catalyses (5Z,8Z,11Z,14Z)-eicosatetraenoate + O2 = (8S)-hydroperoxy-(5Z,9E,11Z,14Z)-eicosatetraenoate. It catalyses the reaction (5Z,8Z,11Z,14Z)-eicosatetraenoate + O2 = (12S)-hydroperoxy-(5Z,8Z,10E,14Z)-eicosatetraenoate. The catalysed reaction is (5Z,8Z)-eicosadienoate + O2 = (5S)-hydroperoxy-(6E,8Z)-eicosadienoate. It carries out the reaction (12S)-hydroxy-(5Z,8Z,10E,14Z)-eicosatetraenoate + O2 = (5S)-hydroperoxy-(12S)-hydroxy-(6E,8Z,10E,14Z)-eicosatetraenoate. The enzyme catalyses (5Z,8Z,11Z,14Z,17Z)-eicosapentaenoate + O2 = 5-hydroperoxy-(6E,8Z,11Z,14Z,17Z)-eicosapentaenoate. It catalyses the reaction (4Z,7Z,10Z,13Z,16Z,19Z)-docosahexaenoate + O2 = (14S)-hydroperoxy-(4Z,7Z,10Z,12E,16Z,19Z)-docosahexaenoate. The catalysed reaction is (4Z,7Z,10Z,13Z,16Z,19Z)-docosahexaenoate + O2 = (7S)-hydroperoxy-(4Z,8E,10Z,13Z,16Z,19Z)-docosahexaenoate. It carries out the reaction (4Z,7Z,10Z,13Z,16Z,19Z)-docosahexaenoate + O2 = (17S)-hydroperoxy-(4Z,7Z,10Z,13Z,15E,19Z)-docosahexaenoate. The protein operates within lipid metabolism; leukotriene A4 biosynthesis. Undergoes a sequential loss of the oxygenase and pseudoperoxidase activities which is dependent on the structural characteristics of the substrate for the reaction, on oxygen concentration and on exposure to phospholipids and calcium. 15-HETE and other 15-mono-hydroxyeicosanoids exhibit the highest inhibitory potencies in their capability of suppressing 5-lipoxygenation of arachidonic acid, whereas the other HETEs, (5S,15S)-dihydroxy-(6E,8Z,11Z,13E)-eicosatetraenoic acid (5,15-diHETE) as well as octadecanoids, are modest or poor inhibitors. The formation of (5S)-hydroperoxy-(15S)-hydroxy-(6E,8Z,11Z,13E)-eicosatetraenoate is strongly stimulated by either hydroperoxypolyenoic fatty acids or arachidonic acid. Arachidonate 5-lipoxygenase and leukotriene A4 synthase activities are allosterically increased by ATP. Its function is as follows. Catalyzes the oxygenation of arachidonate ((5Z,8Z,11Z,14Z)-eicosatetraenoate) to 5-hydroperoxyeicosatetraenoate (5-HPETE) followed by the dehydration to 5,6- epoxyeicosatetraenoate (Leukotriene A4/LTA4), the first two steps in the biosynthesis of leukotrienes, which are potent mediators of inflammation. Also catalyzes the oxygenation of arachidonate into 8-hydroperoxyicosatetraenoate (8-HPETE) and 12-hydroperoxyicosatetraenoate (12-HPETE). Displays lipoxin synthase activity being able to convert (15S)-HETE into a conjugate tetraene. Although arachidonate is the preferred substrate, this enzyme can also metabolize oxidized fatty acids derived from arachidonate such as (15S)-HETE, eicosapentaenoate (EPA) such as (18R)- and (18S)-HEPE or docosahexaenoate (DHA) which lead to the formation of specialized pro-resolving mediators (SPM) lipoxin and resolvins E and D respectively, therefore it participates in anti-inflammatory responses. Oxidation of DHA directly inhibits endothelial cell proliferation and sprouting angiogenesis via peroxisome proliferator-activated receptor gamma (PPARgamma). It does not catalyze the oxygenation of linoleic acid and does not convert (5S)-HETE to lipoxin isomers. In addition to inflammatory processes, it participates in dendritic cell migration, wound healing through an antioxidant mechanism based on heme oxygenase-1 (HO-1) regulation expression, monocyte adhesion to the endothelium via ITGAM expression on monocytes. Moreover, it helps establish an adaptive humoral immunity by regulating primary resting B cells and follicular helper T cells and participates in the CD40-induced production of reactive oxygen species (ROS) after CD40 ligation in B cells through interaction with PIK3R1 that bridges ALOX5 with CD40. May also play a role in glucose homeostasis, regulation of insulin secretion and palmitic acid-induced insulin resistance via AMPK. Can regulate bone mineralization and fat cell differentiation increases in induced pluripotent stem cells. This is Polyunsaturated fatty acid 5-lipoxygenase from Homo sapiens (Human).